Here is a 475-residue protein sequence, read N- to C-terminus: UDP-N-acetylmuramate--L-alanine ligase (475 aa).

125-131 (GTHGKTT) is an ATP binding site.

It belongs to the MurCDEF family.

It localises to the cytoplasm. It carries out the reaction UDP-N-acetyl-alpha-D-muramate + L-alanine + ATP = UDP-N-acetyl-alpha-D-muramoyl-L-alanine + ADP + phosphate + H(+). Its pathway is cell wall biogenesis; peptidoglycan biosynthesis. Functionally, cell wall formation. The chain is UDP-N-acetylmuramate--L-alanine ligase from Haemophilus influenzae (strain PittGG).